The sequence spans 596 residues: Inactive metallocarboxypeptidase ECM14 (596 aa).

The N-terminal stretch at 1–22 (MHFSVRLSLFLTLASSLPLVSA) is a signal peptide. Residues 23 to 184 (VPQHEDQAYT…QTIYESYPKA (162 aa)) constitute a propeptide that is removed on maturation. Positions 181–210 (YPKAGSAPPSQQGPTTRRFSPSASTSKSKP) are disordered. A compositionally biased stretch (polar residues) spans 188–207 (PPSQQGPTTRRFSPSASTSK). One can recognise a Peptidase M14 domain in the interval 220-546 (DYQPLSVLLP…RAMVAMGKFL (327 aa)). 2 residues coordinate Zn(2+): H285 and E288. Substrate contacts are provided by residues 285 to 288 (HARE), R343, and 360 to 361 (DH). C354 and C377 are disulfide-bonded. N370 carries an N-linked (GlcNAc...) asparagine glycan. Zn(2+) is bound at residue H417. Residue 418–419 (SY) participates in substrate binding. The tract at residues 557 to 596 (DGLRASEEPQDYDNDLEDGEDDKDEQDSTVFRAQADDLQS) is disordered. The segment covering 564–583 (EPQDYDNDLEDGEDDKDEQD) has biased composition (acidic residues).

This sequence belongs to the peptidase M14 family. The cofactor is Zn(2+).

It localises to the vacuole. It is found in the secreted. Inactive carboxypeptidase that may play a role in cell wall organization and biogenesis. The protein is Inactive metallocarboxypeptidase ECM14 (ECM14) of Trichophyton verrucosum (strain HKI 0517).